A 192-amino-acid chain; its full sequence is Cytidylate kinase (192 aa).

Position 7–15 (7–15 (GPAGSGKST)) interacts with ATP.

It belongs to the cytidylate kinase family. Type 2 subfamily.

It is found in the cytoplasm. The catalysed reaction is CMP + ATP = CDP + ADP. The enzyme catalyses dCMP + ATP = dCDP + ADP. This Natronomonas pharaonis (strain ATCC 35678 / DSM 2160 / CIP 103997 / JCM 8858 / NBRC 14720 / NCIMB 2260 / Gabara) (Halobacterium pharaonis) protein is Cytidylate kinase.